Consider the following 110-residue polypeptide: Large ribosomal subunit protein uL22 (110 aa).

Belongs to the universal ribosomal protein uL22 family. In terms of assembly, part of the 50S ribosomal subunit.

Its function is as follows. This protein binds specifically to 23S rRNA; its binding is stimulated by other ribosomal proteins, e.g. L4, L17, and L20. It is important during the early stages of 50S assembly. It makes multiple contacts with different domains of the 23S rRNA in the assembled 50S subunit and ribosome. Functionally, the globular domain of the protein is located near the polypeptide exit tunnel on the outside of the subunit, while an extended beta-hairpin is found that lines the wall of the exit tunnel in the center of the 70S ribosome. In Nitrosomonas eutropha (strain DSM 101675 / C91 / Nm57), this protein is Large ribosomal subunit protein uL22.